Consider the following 108-residue polypeptide: uncharacterized protein (108 aa).

The helical transmembrane segment at 72 to 94 (LGLHTSVFFFLRIVCMSSAASVF) threads the bilayer.

The protein localises to the membrane. This is an uncharacterized protein from Saccharomyces cerevisiae (strain ATCC 204508 / S288c) (Baker's yeast).